The chain runs to 395 residues: Dual specificity mitogen-activated protein kinase kinase 1 (395 aa).

The interval 1–24 (MPKKKPTPIQLNPNPEGTAVNGTP) is disordered. Polar residues predominate over residues 9-24 (IQLNPNPEGTAVNGTP). One can recognise a Protein kinase domain in the interval 68-363 (FEKVSELGAG…LKQLMVHSFI (296 aa)). Residues 74–82 (LGAGNGGVV) and K97 each bind ATP. The active-site Proton acceptor is the D190. Residues S218 and S222 each carry the phosphoserine; by RAF modification. The disordered stretch occupies residues 284–305 (ASSELAPRPRPPGRPISSYGPD).

Belongs to the protein kinase superfamily. STE Ser/Thr protein kinase family. MAP kinase kinase subfamily. In terms of processing, activated by phosphorylation on Ser/Thr catalyzed by MAP kinase kinase kinases (RAF or MOS). As to expression, expressed in the central nervous system, kidney, liver, intestine and the hematopoietic system.

It localises to the cytoplasm. It is found in the cytoskeleton. The protein localises to the microtubule organizing center. Its subcellular location is the centrosome. The protein resides in the spindle pole body. It localises to the nucleus. The catalysed reaction is L-seryl-[protein] + ATP = O-phospho-L-seryl-[protein] + ADP + H(+). The enzyme catalyses L-threonyl-[protein] + ATP = O-phospho-L-threonyl-[protein] + ADP + H(+). It catalyses the reaction L-tyrosyl-[protein] + ATP = O-phospho-L-tyrosyl-[protein] + ADP + H(+). Dual specificity protein kinase which acts as an essential component of the MAP kinase signal transduction pathway. Binding of extracellular ligands such as growth factors, cytokines and hormones to their cell-surface receptors activates the MAPK/ERK cascade, ultimately leading to phosphorylation of a threonine and a tyrosine residue in a Thr-Glu-Tyr sequence located in MAP kinases. Depending on the cellular context, this pathway mediates diverse biological functions such as cell growth, adhesion, survival and differentiation predominantly through the regulation of transcription, metabolism and cytoskeletal rearrangements. The polypeptide is Dual specificity mitogen-activated protein kinase kinase 1 (map2k1) (Xenopus laevis (African clawed frog)).